The primary structure comprises 144 residues: Ribosomal RNA large subunit methyltransferase H (144 aa).

S-adenosyl-L-methionine contacts are provided by residues leucine 63, glycine 92, and leucine 111 to phenylalanine 116.

It belongs to the RNA methyltransferase RlmH family. As to quaternary structure, homodimer.

It localises to the cytoplasm. The enzyme catalyses pseudouridine(1915) in 23S rRNA + S-adenosyl-L-methionine = N(3)-methylpseudouridine(1915) in 23S rRNA + S-adenosyl-L-homocysteine + H(+). Its function is as follows. Specifically methylates the pseudouridine at position 1915 (m3Psi1915) in 23S rRNA. The protein is Ribosomal RNA large subunit methyltransferase H of Synechococcus sp. (strain CC9902).